A 340-amino-acid polypeptide reads, in one-letter code: Lysophospholipase L2 (340 aa).

The protein resides in the cell inner membrane. It catalyses the reaction a 1-acyl-sn-glycero-3-phosphocholine + H2O = sn-glycerol 3-phosphocholine + a fatty acid + H(+). This chain is Lysophospholipase L2 (pldB), found in Escherichia coli O6:H1 (strain CFT073 / ATCC 700928 / UPEC).